Reading from the N-terminus, the 200-residue chain is Cleavage and polyadenylation specificity factor subunit 5 (200 aa).

The Nudix hydrolase domain occupies Leu45–Glu170. Residues Asn70 to Phe72 form an interaction with RNA region. The short motif at Gly77–Ser98 is the Nudix box element.

The protein belongs to the Nudix hydrolase family. CPSF5 subfamily. In terms of assembly, homodimer (via N- and C-terminus); binds RNA as homodimer. Component of the cleavage factor Im (CFIm) complex.

The protein localises to the nucleus. Its subcellular location is the cytoplasm. Its function is as follows. Component of the cleavage factor Im (CFIm) complex that functions as an activator of the pre-mRNA 3'-end cleavage and polyadenylation processing required for the maturation of pre-mRNA into functional mRNAs. CFIm contributes to the recruitment of multiprotein complexes on specific sequences on the pre-mRNA 3'-end, so called cleavage and polyadenylation signals (pA signals). Most pre-mRNAs contain multiple pA signals, resulting in alternative cleavage and polyadenylation (APA) producing mRNAs with variable 3'-end formation. The CFIm complex acts as a key regulator of cleavage and polyadenylation site choice during APA through its binding to 5'-UGUA-3' elements localized in the 3'-untranslated region (UTR) for a huge number of pre-mRNAs. Binds to 5'-UGUA-3' elements localized upstream of pA signals that act as enhancers of pre-mRNA 3'-end processing. The homodimer mediates simultaneous sequence-specific recognition of two 5'-UGUA-3' elements within the pre-mRNA. Plays a role in somatic cell fate transitions and pluripotency by regulating widespread changes in gene expression through an APA-dependent function. Binds to chromatin. This Dictyostelium discoideum (Social amoeba) protein is Cleavage and polyadenylation specificity factor subunit 5.